Here is a 109-residue protein sequence, read N- to C-terminus: UPF0060 membrane protein HEAR0108 (109 aa).

A run of 4 helical transmembrane segments spans residues 7–27, 33–53, 63–83, and 87–107; these read VALF…PYLW, SIWL…LLSL, AAYG…VDGI, and NWDV…MFAP.

The protein belongs to the UPF0060 family.

Its subcellular location is the cell inner membrane. This chain is UPF0060 membrane protein HEAR0108, found in Herminiimonas arsenicoxydans.